A 1378-amino-acid polypeptide reads, in one-letter code: Cell surface hyaluronidase (1378 aa).

Residues 1–77 form a disordered region; it reads MQVNDGPSSH…GNRREQAQNQ (77 aa). The Cytoplasmic segment spans residues 1 to 82; sequence MQVNDGPSSH…QAQNQQRKNT (82 aa). The span at 36–58 shows a compositional bias: pro residues; the sequence is RSPPPAKAPPPPPLKPPVPPPAR. Residues 83–103 form a helical; Signal-anchor for type II membrane protein membrane-spanning segment; it reads YICVGIFFGIFLLILILVLSL. Over 104–1378 the chain is Extracellular; it reads TSKDVLDENC…MDLELLKKIS (1275 aa). The 127-residue stretch at 121–247 folds into the G8 domain; it reads RSWKPGHDLK…ERMSWTFLTR (127 aa). 5 N-linked (GlcNAc...) asparagine glycosylation sites follow: asparagine 171, asparagine 264, asparagine 360, asparagine 527, and asparagine 639. The GG-type lectin 1 domain occupies 257–414; sequence GDHAFQKNFS…YPTTGFQVDA (158 aa). One copy of the PbH1 1 repeat lies at 672–694; the sequence is HPNNHLISNSAAGSQDAGIWYVF. N-linked (GlcNAc...) asparagine glycosylation is present at asparagine 696. One copy of the PbH1 2 repeat lies at 714 to 736; it reads TPLGTFFNNRVHSNFKAGLFIDR. N-linked (GlcNAc...) asparagine glycans are attached at residues asparagine 742, asparagine 854, asparagine 905, asparagine 996, asparagine 1069, asparagine 1160, and asparagine 1221. The region spanning 1203–1363 is the GG-type lectin 2 domain; the sequence is NSYLQTQIKS…LEEYSCPPKK (161 aa).

Belongs to the CEMIP family. Requires Ca(2+) as cofactor.

Its subcellular location is the cell membrane. The catalysed reaction is Random hydrolysis of (1-&gt;4)-linkages between N-acetyl-beta-D-glucosamine and D-glucuronate residues in hyaluronate.. Its function is as follows. Cell surface hyaluronidase that mediates the initial cleavage of extracellular high-molecular-weight hyaluronan into intermediate-size hyaluronan. Acts as a regulator of angiogenesis in embryos by mediating degradation of extracellular hyaluronan, thereby promoting VEGF signaling. Acts as a regulator of heart development during myocardial and endocardial morphogenesis: involved in the looping stage of heart morphogenesis. Stimulates migration of endocardial cells and increases both myocardial and endocardial fusion. Involved in the restriction of endocardial cushions (ECs) formation to the atrioventricular canal (AVC). Also required for muscle fiber attachment. Is very specific to hyaluronan; not able to cleave chondroitin sulfate or dermatan sulfate. This is Cell surface hyaluronidase (cemip2) from Danio rerio (Zebrafish).